The primary structure comprises 351 residues: Synaptonemal complex central element protein 1 (351 aa).

Positions 1-10 (MAGRSLTSKA) are enriched in polar residues. Disordered regions lie at residues 1 to 31 (MAGR…TSSQ) and 267 to 351 (KCQQ…KELF). Residues 52–290 (RVEVLINRIN…ELEKHGMQVP (239 aa)) adopt a coiled-coil conformation.

Belongs to the SYCE family. Homodimer. Found in a complex with SYCP1 and SYCE2. Interacts with SYCP1, SYCE2 and SYCE3. Interacts with SIX6OS1.

The protein resides in the nucleus. Its subcellular location is the chromosome. Its function is as follows. Major component of the transverse central element of synaptonemal complexes (SCS), formed between homologous chromosomes during meiotic prophase. Requires SYCP1 in order to be incorporated into the central element. May have a role in the synaptonemal complex assembly, stabilization and recombination. The sequence is that of Synaptonemal complex central element protein 1 (SYCE1) from Homo sapiens (Human).